Here is a 61-residue protein sequence, read N- to C-terminus: Metallothionein-2B (61 aa).

An N-acetylmethionine modification is found at M1. The tract at residues 1–29 (MDPNCSCATGDSCTCASSCKCKECKCTSC) is beta. C5, C7, C13, C15, C19, C21, C24, C26, C29, C33, C34, C36, C37, C41, C44, C48, C50, C57, C59, and C60 together coordinate a divalent metal cation. The segment at 30-61 (KKSCCSCCPAGCTKCAQGCICKGASDKCSCCA) is alpha.

The protein belongs to the metallothionein superfamily. Type 1 family. As to quaternary structure, monomer.

Its function is as follows. Metallothioneins have a high content of cysteine residues that bind various heavy metals; these proteins are transcriptionally regulated by both heavy metals and glucocorticoids. The protein is Metallothionein-2B of Oryctolagus cuniculus (Rabbit).